Consider the following 242-residue polypeptide: MIIEIITIFPSFFKSFCETSIIKRALEQKKVQIKIHDLRIYSSNKHNQVDDSVYGGGVGMLLSFPPFFDCLQKIKTPQSKVILLSPQGQIFNQIHATNFAQKETHLIILCGNYEGVDARILQYIDAEISIGDYVLTGGEIAATVLVDAITRLIPGVIKEQSYLEDSHQQGLLKYPQYTRPQNYFNHVVPTILLSGNHAKIRSWRQKESLKKTLQKRPDLLENKKLTLEQTKLLKEIKQELQK.

Residues G111 and I130–L135 each bind S-adenosyl-L-methionine.

It belongs to the RNA methyltransferase TrmD family. As to quaternary structure, homodimer.

It is found in the cytoplasm. It catalyses the reaction guanosine(37) in tRNA + S-adenosyl-L-methionine = N(1)-methylguanosine(37) in tRNA + S-adenosyl-L-homocysteine + H(+). Its function is as follows. Specifically methylates guanosine-37 in various tRNAs. This is tRNA (guanine-N(1)-)-methyltransferase from Aster yellows witches'-broom phytoplasma (strain AYWB).